The chain runs to 363 residues: tRNA(Met) cytidine acetate ligase (363 aa).

ATP is bound by residues 7 to 20 (IAEF…HKYL), Gly96, Asn152, and Arg175.

The protein belongs to the TmcAL family.

It is found in the cytoplasm. The enzyme catalyses cytidine(34) in elongator tRNA(Met) + acetate + ATP = N(4)-acetylcytidine(34) in elongator tRNA(Met) + AMP + diphosphate. Its function is as follows. Catalyzes the formation of N(4)-acetylcytidine (ac(4)C) at the wobble position of elongator tRNA(Met), using acetate and ATP as substrates. First activates an acetate ion to form acetyladenylate (Ac-AMP) and then transfers the acetyl group to tRNA to form ac(4)C34. The sequence is that of tRNA(Met) cytidine acetate ligase from Streptococcus thermophilus (strain ATCC BAA-250 / LMG 18311).